A 363-amino-acid polypeptide reads, in one-letter code: UDP-N-acetylglucosamine--N-acetylmuramyl-(pentapeptide) pyrophosphoryl-undecaprenol N-acetylglucosamine transferase (363 aa).

UDP-N-acetyl-alpha-D-glucosamine is bound by residues T12 to G14, N122, R164, S191, I245, and Q290.

This sequence belongs to the glycosyltransferase 28 family. MurG subfamily.

The protein localises to the cell membrane. It carries out the reaction di-trans,octa-cis-undecaprenyl diphospho-N-acetyl-alpha-D-muramoyl-L-alanyl-D-glutamyl-meso-2,6-diaminopimeloyl-D-alanyl-D-alanine + UDP-N-acetyl-alpha-D-glucosamine = di-trans,octa-cis-undecaprenyl diphospho-[N-acetyl-alpha-D-glucosaminyl-(1-&gt;4)]-N-acetyl-alpha-D-muramoyl-L-alanyl-D-glutamyl-meso-2,6-diaminopimeloyl-D-alanyl-D-alanine + UDP + H(+). It participates in cell wall biogenesis; peptidoglycan biosynthesis. Functionally, cell wall formation. Catalyzes the transfer of a GlcNAc subunit on undecaprenyl-pyrophosphoryl-MurNAc-pentapeptide (lipid intermediate I) to form undecaprenyl-pyrophosphoryl-MurNAc-(pentapeptide)GlcNAc (lipid intermediate II). This is UDP-N-acetylglucosamine--N-acetylmuramyl-(pentapeptide) pyrophosphoryl-undecaprenol N-acetylglucosamine transferase from Lawsonia intracellularis (strain PHE/MN1-00).